We begin with the raw amino-acid sequence, 103 residues long: Hexon-interlacing protein (103 aa).

Residues 72–99 (LDELKIQVAAMQNSVTAIQREVNDLKQR) are a coiled coil.

Belongs to the adenoviridae hexon-interlacing protein family. As to quaternary structure, homotrimer. Interacts with hexon protein; this interaction tethers the hexons together. Self-interacts with adjacent proteins. Interacts with kinesin light chain KLC1; this interaction leads to capsid disruption at the nuclear pore complex during virus entry into host cell.

Its subcellular location is the virion. The protein localises to the host nucleus. In terms of biological role, structural component of the virion that acts as a cement protein on the capsid exterior and forms triskelion structures consisting of three molecules that stabilize three hexon trimers at the center of each icosahedral facet and fixes the peripentonal hexons. Dispensable for assembly. During virus entry, recruits the anterograde motor kinesin-1 to the capsid docked at the nuclear pore complex thereby subjecting the docked capsid to a pulling force. The resulting tension leads to capsid disruption, dispersion of capsid fragments toward cell periphery and eventually viral DNA entry into the host nucleus. The sequence is that of Hexon-interlacing protein from Canis lupus familiaris (Dog).